The chain runs to 211 residues: Superoxide dismutase [Mn], mitochondrial (211 aa).

The transit peptide at 1-24 (MLCRAVCSASRRLAPALGILGVRQ) directs the protein to the mitochondrion. His-50 lines the Mn(2+) pocket. Tyr-58 carries the 3'-nitrotyrosine modification. Lys-68 and Lys-75 each carry N6-acetyllysine; alternate. Residues Lys-68 and Lys-75 each carry the N6-succinyllysine; alternate modification. Residue His-98 coordinates Mn(2+). At Lys-114 the chain carries N6-acetyllysine. 2 positions are modified to N6-acetyllysine; alternate: Lys-122 and Lys-130. Lys-122 and Lys-130 each carry N6-succinyllysine; alternate. Residues Asp-183 and His-187 each contribute to the Mn(2+) site. At Lys-202 the chain carries N6-acetyllysine.

It belongs to the iron/manganese superoxide dismutase family. In terms of assembly, homotetramer. It depends on Mn(2+) as a cofactor. Nitrated under oxidative stress. Nitration coupled with oxidation inhibits the catalytic activity. Post-translationally, acetylation at Lys-122 decreases enzymatic activity. Deacetylated by SIRT3 upon exposure to ionizing radiations or after long fasting. In terms of processing, polyubiquitinated; leading to proteasomal degradation. Deubiquitinated by USP36 which increases protein stability.

Its subcellular location is the mitochondrion matrix. The catalysed reaction is 2 superoxide + 2 H(+) = H2O2 + O2. In terms of biological role, destroys superoxide anion radicals which are normally produced within the cells and which are toxic to biological systems. This chain is Superoxide dismutase [Mn], mitochondrial (SOD2), found in Cavia porcellus (Guinea pig).